The following is a 306-amino-acid chain: Porphobilinogen deaminase (306 aa).

Cys239 is modified (S-(dipyrrolylmethanemethyl)cysteine).

It belongs to the HMBS family. In terms of assembly, monomer. Requires dipyrromethane as cofactor.

The enzyme catalyses 4 porphobilinogen + H2O = hydroxymethylbilane + 4 NH4(+). It participates in porphyrin-containing compound metabolism; protoporphyrin-IX biosynthesis; coproporphyrinogen-III from 5-aminolevulinate: step 2/4. Its function is as follows. Tetrapolymerization of the monopyrrole PBG into the hydroxymethylbilane pre-uroporphyrinogen in several discrete steps. The chain is Porphobilinogen deaminase (hemC) from Helicobacter pylori (strain ATCC 700392 / 26695) (Campylobacter pylori).